Consider the following 227-residue polypeptide: Tegument protein ORF55 (227 aa).

Cys-11 carries S-palmitoyl cysteine; by host lipidation. The interval 183 to 227 is disordered; it reads VTRQPEATLPKPPTEDPSVSAMHSSIPPRPSSTLEETTESAIGST. A compositionally biased stretch (polar residues) spans 213–227; it reads SSTLEETTESAIGST.

This sequence belongs to the herpesviridae UL51 family. As to quaternary structure, oligomerizes. Interacts with ORF42; this interaction mediates ORF42 incorporation to virions. Interacts with vBCL2. Phosphorylated. In terms of processing, palmitoylation is necessary for Golgi localization.

The protein localises to the virion tegument. It is found in the host cytoplasm. The protein resides in the host Golgi apparatus. Functionally, plays several roles during the time course of infection, including egress of virus particles from the perinuclear space and secondary envelopment of cytoplasmic capsids that bud into specific trans-Golgi network (TGN)-derived membranes. This Homo sapiens (Human) protein is Tegument protein ORF55 (ORF55).